The chain runs to 261 residues: Cytochrome c oxidase subunit 3 (261 aa).

Residues 1–15 (MAHQAHAYHMVDPSP) are Mitochondrial matrix-facing. A helical transmembrane segment spans residues 16–34 (WPLTGAVAALLMTSGLAVW). The Mitochondrial intermembrane segment spans residues 35–40 (FHFHSM). A helical transmembrane segment spans residues 41-66 (YLLYLGLTLLLLTMVQWWRDIIREGT). Residues 67-72 (FQGHHT) lie on the Mitochondrial matrix side of the membrane. Residues 73–105 (PPVQKGLRYGMILFITSEVFFFLGFFWAFYHSS) form a helical membrane-spanning segment. Residues 106 to 128 (LAPTPELGGCWPPTGIYPLDPFE) are Mitochondrial intermembrane-facing. The chain crosses the membrane as a helical span at residues 129 to 152 (VPLLNTAVLLASGVTVTWAHHSLM). Over 153–155 (EGN) the chain is Mitochondrial matrix. Residues 156-183 (RKEAIQALTLTVLLGFYFTALQAMEYYE) form a helical membrane-spanning segment. Residues 184–190 (APFTIAD) are Mitochondrial intermembrane-facing. A helical transmembrane segment spans residues 191–223 (GVYGSTFFVATGFHGLHVIIGSTFLMVCLLRQI). At 224 to 232 (QYHFTSEHH) the chain is on the mitochondrial matrix side. Residues 233 to 256 (FGFERAAWYWHFVDVVWLFLYVSI) form a helical membrane-spanning segment. Over 257–261 (YWWGS) the chain is Mitochondrial intermembrane.

It belongs to the cytochrome c oxidase subunit 3 family. Component of the cytochrome c oxidase (complex IV, CIV), a multisubunit enzyme composed of 14 subunits. The complex is composed of a catalytic core of 3 subunits MT-CO1, MT-CO2 and MT-CO3, encoded in the mitochondrial DNA, and 11 supernumerary subunits COX4I, COX5A, COX5B, COX6A, COX6B, COX6C, COX7A, COX7B, COX7C, COX8 and NDUFA4, which are encoded in the nuclear genome. The complex exists as a monomer or a dimer and forms supercomplexes (SCs) in the inner mitochondrial membrane with NADH-ubiquinone oxidoreductase (complex I, CI) and ubiquinol-cytochrome c oxidoreductase (cytochrome b-c1 complex, complex III, CIII), resulting in different assemblies (supercomplex SCI(1)III(2)IV(1) and megacomplex MCI(2)III(2)IV(2)).

It localises to the mitochondrion inner membrane. It carries out the reaction 4 Fe(II)-[cytochrome c] + O2 + 8 H(+)(in) = 4 Fe(III)-[cytochrome c] + 2 H2O + 4 H(+)(out). Functionally, component of the cytochrome c oxidase, the last enzyme in the mitochondrial electron transport chain which drives oxidative phosphorylation. The respiratory chain contains 3 multisubunit complexes succinate dehydrogenase (complex II, CII), ubiquinol-cytochrome c oxidoreductase (cytochrome b-c1 complex, complex III, CIII) and cytochrome c oxidase (complex IV, CIV), that cooperate to transfer electrons derived from NADH and succinate to molecular oxygen, creating an electrochemical gradient over the inner membrane that drives transmembrane transport and the ATP synthase. Cytochrome c oxidase is the component of the respiratory chain that catalyzes the reduction of oxygen to water. Electrons originating from reduced cytochrome c in the intermembrane space (IMS) are transferred via the dinuclear copper A center (CU(A)) of subunit 2 and heme A of subunit 1 to the active site in subunit 1, a binuclear center (BNC) formed by heme A3 and copper B (CU(B)). The BNC reduces molecular oxygen to 2 water molecules using 4 electrons from cytochrome c in the IMS and 4 protons from the mitochondrial matrix. This chain is Cytochrome c oxidase subunit 3 (MT-CO3), found in Squalus acanthias (Spiny dogfish).